We begin with the raw amino-acid sequence, 119 residues long: Large ribosomal subunit protein bL20 (119 aa).

The protein belongs to the bacterial ribosomal protein bL20 family.

In terms of biological role, binds directly to 23S ribosomal RNA and is necessary for the in vitro assembly process of the 50S ribosomal subunit. It is not involved in the protein synthesizing functions of that subunit. This is Large ribosomal subunit protein bL20 from Alkalilimnicola ehrlichii (strain ATCC BAA-1101 / DSM 17681 / MLHE-1).